Reading from the N-terminus, the 449-residue chain is Exodeoxyribonuclease 7 large subunit (449 aa).

Belongs to the XseA family. In terms of assembly, heterooligomer composed of large and small subunits.

Its subcellular location is the cytoplasm. It carries out the reaction Exonucleolytic cleavage in either 5'- to 3'- or 3'- to 5'-direction to yield nucleoside 5'-phosphates.. Bidirectionally degrades single-stranded DNA into large acid-insoluble oligonucleotides, which are then degraded further into small acid-soluble oligonucleotides. The protein is Exodeoxyribonuclease 7 large subunit of Salmonella typhi.